Consider the following 457-residue polypeptide: Multidrug resistance protein MdtK (457 aa).

Helical transmembrane passes span 11–31 (LLAL…MGVV), 53–73 (IWLP…PVIA), 93–113 (VLAG…GYII), 127–147 (AVNY…FQVM), 160–180 (GMAM…IFIY), 188–208 (LGGV…FFCM), 243–263 (MPVA…ALLV), 276–296 (IALN…AAVT), 316–336 (RTGI…TVVF), 357–377 (LMLL…GSGV), 387–407 (IFFI…YILG), and 418–438 (PAGF…MMMW).

The protein belongs to the multi antimicrobial extrusion (MATE) (TC 2.A.66.1) family. MdtK subfamily.

It is found in the cell inner membrane. In terms of biological role, multidrug efflux pump that functions probably as a Na(+)/drug antiporter. The protein is Multidrug resistance protein MdtK of Cronobacter sakazakii (strain ATCC BAA-894) (Enterobacter sakazakii).